The primary structure comprises 185 residues: Ribose 1,5-bisphosphate phosphokinase PhnN (185 aa).

13-20 (GPSGAGKD) is a binding site for ATP.

This sequence belongs to the ribose 1,5-bisphosphokinase family.

It catalyses the reaction alpha-D-ribose 1,5-bisphosphate + ATP = 5-phospho-alpha-D-ribose 1-diphosphate + ADP. It participates in metabolic intermediate biosynthesis; 5-phospho-alpha-D-ribose 1-diphosphate biosynthesis; 5-phospho-alpha-D-ribose 1-diphosphate from D-ribose 5-phosphate (route II): step 3/3. Catalyzes the phosphorylation of ribose 1,5-bisphosphate to 5-phospho-D-ribosyl alpha-1-diphosphate (PRPP). In Chromobacterium violaceum (strain ATCC 12472 / DSM 30191 / JCM 1249 / CCUG 213 / NBRC 12614 / NCIMB 9131 / NCTC 9757 / MK), this protein is Ribose 1,5-bisphosphate phosphokinase PhnN.